The following is a 50-amino-acid chain: Sperm protamine P1 (50 aa).

Intrachain disulfides connect cysteine 7-cysteine 15 and cysteine 39-cysteine 47.

Belongs to the protamine P1 family. As to quaternary structure, cross-linked by interchain disulfide bonds around the DNA-helix. As to expression, testis.

The protein localises to the nucleus. It is found in the chromosome. Its function is as follows. Protamines substitute for histones in the chromatin of sperm during the haploid phase of spermatogenesis. They compact sperm DNA into a highly condensed, stable and inactive complex. The polypeptide is Sperm protamine P1 (PRM1) (Sus scrofa (Pig)).